An 870-amino-acid polypeptide reads, in one-letter code: Phenylalanine--tRNA ligase beta subunit (870 aa).

The 110-residue stretch at 39-148 (AADLQKFEVA…EDAVVGEPFT (110 aa)) folds into the tRNA-binding domain. The region spanning 427–551 (PAKKTLDFPA…RIYGYDKIES (125 aa)) is the B5 domain. The RPE1 insert domain occupies 450–498 (LLHNEANKGEFVGNTEHSIAAYKEVREDASTGLTPKLPLEASYVKGLNI). Mg(2+)-binding residues include Asp-529, Asp-535, Glu-538, and Glu-539. An FDX-ACB domain is found at 776–869 (SDYQANFRDY…IEQKFQGTLR (94 aa)).

This sequence belongs to the phenylalanyl-tRNA synthetase beta subunit family. Type 1 subfamily. Tetramer of two alpha and two beta subunits. It depends on Mg(2+) as a cofactor.

Its subcellular location is the cytoplasm. The catalysed reaction is tRNA(Phe) + L-phenylalanine + ATP = L-phenylalanyl-tRNA(Phe) + AMP + diphosphate + H(+). The chain is Phenylalanine--tRNA ligase beta subunit (pheT) from Rickettsia bellii (strain RML369-C).